We begin with the raw amino-acid sequence, 639 residues long: Ubiquitin-like modifier-activating enzyme ATG7 (639 aa).

The GXGXXG motif signature appears at 322 to 327 (GAGTLG). Cys-502 acts as the Glycyl thioester intermediate in catalysis.

The protein belongs to the ATG7 family. As to quaternary structure, homodimer.

It is found in the cytoplasm. The protein resides in the preautophagosomal structure. In terms of biological role, E1-like activating enzyme involved in the 2 ubiquitin-like systems required for cytoplasm to vacuole transport (Cvt) and autophagy. Activates ATG12 for its conjugation with ATG5 and ATG8 for its conjugation with phosphatidylethanolamine. Both systems are needed for the ATG8 association to Cvt vesicles and autophagosomes membranes. Autophagy is essential for maintenance of amino acid levels and protein synthesis under nitrogen starvation. Required for selective autophagic degradation of the nucleus (nucleophagy) as well as for mitophagy which contributes to regulate mitochondrial quantity and quality by eliminating the mitochondria to a basal level to fulfill cellular energy requirements and preventing excess ROS production. Plays a role in the regulation of filamentous growth and chronological longevity. The chain is Ubiquitin-like modifier-activating enzyme ATG7 (APG7) from Candida albicans (strain SC5314 / ATCC MYA-2876) (Yeast).